The chain runs to 251 residues: Triosephosphate isomerase (251 aa).

Residue 9-11 (NWK) participates in substrate binding. The active-site Electrophile is His96. The Proton acceptor role is filled by Glu168. Substrate-binding positions include Gly174, Ser214, and 235–236 (GG).

Belongs to the triosephosphate isomerase family. In terms of assembly, homodimer.

It localises to the cytoplasm. It catalyses the reaction D-glyceraldehyde 3-phosphate = dihydroxyacetone phosphate. The protein operates within carbohydrate biosynthesis; gluconeogenesis. It functions in the pathway carbohydrate degradation; glycolysis; D-glyceraldehyde 3-phosphate from glycerone phosphate: step 1/1. Functionally, involved in the gluconeogenesis. Catalyzes stereospecifically the conversion of dihydroxyacetone phosphate (DHAP) to D-glyceraldehyde-3-phosphate (G3P). This Porphyromonas gingivalis (strain ATCC 33277 / DSM 20709 / CIP 103683 / JCM 12257 / NCTC 11834 / 2561) protein is Triosephosphate isomerase.